Consider the following 153-residue polypeptide: Large ribosomal subunit protein uL13 (153 aa).

It belongs to the universal ribosomal protein uL13 family. Part of the 50S ribosomal subunit.

Its function is as follows. This protein is one of the early assembly proteins of the 50S ribosomal subunit, although it is not seen to bind rRNA by itself. It is important during the early stages of 50S assembly. In Xanthobacter autotrophicus (strain ATCC BAA-1158 / Py2), this protein is Large ribosomal subunit protein uL13.